The chain runs to 450 residues: Interferon-induced protein 75 (450 aa).

The region spanning 1-108 (MFTLTKALEK…IFRSFRNVGY (108 aa)) is the HSR domain. Disordered regions lie at residues 131–156 (CSLQ…APRV) and 170–225 (LDEQ…VKDD). The segment covering 143–154 (QLSLPSHLSSAP) has biased composition (low complexity). Serine 175 and serine 177 each carry phosphoserine. A compositionally biased stretch (basic and acidic residues) spans 197–212 (SRDHQRKDKEDSREMP). The residue at position 226 (serine 226) is a Phosphoserine. Disordered stretches follow at residues 238 to 283 (VLCT…HGVQ) and 318 to 360 (AQTS…KNDA). Basic residues predominate over residues 245–267 (KKARRKKRLNWSNSKRGRQKKKP). Positions 251-266 (KRLNWSNSKRGRQKKK) match the Nuclear localization signal motif. The span at 343–353 (TSTAGKTTQVP) shows a compositional bias: polar residues. Positions 358 to 439 (NDAVDFLSPT…RQLEQKGLLF (82 aa)) constitute an SAND domain.

It localises to the nucleus. In Mus caroli (Ryukyu mouse), this protein is Interferon-induced protein 75 (Ifi75).